The chain runs to 501 residues: MLSTQAELAAFHSGLGQPLQFVPTMGGLHQGHGELIRRAAEQGPVLVSVFVNPLQFAPGEDFERYPRSLEADLALADRYGAAALWTPTVQTIYPDGATADSARQAPAALQQHLCGADRPGHFDGVVTVVARLLELTRPAGLWLGEKDWQQLVILRQLVADLVLPVKIHGVATVREADGLALSSRNQYLSAAQRLQAAALPAALRAADGTTPLDVTRSRLSAAGLEVEYVERVDPQSLQPCGSETALSLLAAAVRCGTTRLIDHSFLMTRQPLVAIDGPAGAGKSTVTRAFAERLGLIYLDTGAMYRAVTWLVQQQGVEPGDAAAVDALLRALDLQLQSLPGGGQQVMVNGEDVSQAIRSPEVTGSVSVVAAHRCVRQALTTQQKAMGAKGGLVAEGRDIGSAVFPDADLKVFLTATVAERARRRALDLEQRGFPVQERSELEAQIAERDHLDSTREEAPLVQAIDAVELVTDGMSIDAVIDALVEQFRARVPEEAWPTPAG.

Residues 1–264 (MLSTQAELAA…CGTTRLIDHS (264 aa)) form a pantoate--beta-alanine ligase region. 25 to 32 (MGGLHQGH) is a binding site for ATP. Histidine 32 functions as the Proton donor in the catalytic mechanism. Glutamine 55 lines the (R)-pantoate pocket. Glutamine 55 lines the beta-alanine pocket. Position 144–147 (144–147 (GEKD)) interacts with ATP. Glutamine 150 contributes to the (R)-pantoate binding site. Residues valine 173 and 181 to 184 (LSSR) each bind ATP. Residues 265–501 (FLMTRQPLVA…PEEAWPTPAG (237 aa)) are cytidylate kinase.

In the N-terminal section; belongs to the pantothenate synthetase family. The protein in the C-terminal section; belongs to the cytidylate kinase family. Type 1 subfamily.

It is found in the cytoplasm. The catalysed reaction is (R)-pantoate + beta-alanine + ATP = (R)-pantothenate + AMP + diphosphate + H(+). The enzyme catalyses CMP + ATP = CDP + ADP. It catalyses the reaction dCMP + ATP = dCDP + ADP. The protein operates within cofactor biosynthesis; (R)-pantothenate biosynthesis; (R)-pantothenate from (R)-pantoate and beta-alanine: step 1/1. Functionally, catalyzes the condensation of pantoate with beta-alanine in an ATP-dependent reaction via a pantoyl-adenylate intermediate. In terms of biological role, catalyzes the transfer of a phosphate group from ATP to either CMP or dCMP to form CDP or dCDP and ADP, respectively. This Parasynechococcus marenigrum (strain WH8102) protein is Bifunctional pantoate ligase/cytidylate kinase.